The sequence spans 2372 residues: Nonribosomal peptide synthase roqA (2372 aa).

The tract at residues glutamate 217–isoleucine 610 is adenylation 1. The interval alanine 723–leucine 745 is disordered. The segment covering serine 725–asparagine 736 has biased composition (polar residues). Residues serine 750–lysine 823 enclose the Carrier 1 domain. Serine 784 carries the post-translational modification O-(pantetheine 4'-phosphoryl)serine. The condensation 1 stretch occupies residues glutamate 856–leucine 1122. The adenylation 2 stretch occupies residues glutamine 1290–leucine 1679. In terms of domain architecture, Carrier 2 spans lysine 1819 to glutamine 1895. Serine 1856 carries the O-(pantetheine 4'-phosphoryl)serine modification. The condensation 2 stretch occupies residues threonine 1962 to isoleucine 2227.

It functions in the pathway alkaloid biosynthesis. In terms of biological role, dipeptide synthase; part of the gene cluster that mediates the biosynthesis of the mycotoxins roquefortine C and meleagrin. The first stage is catalyzed by the dipeptide synthase roqA which condenses histidine and tryptophan to produce histidyltryptophanyldiketopiperazine (HTD). HTD is then converted to roquefortine C through two possible pathways. In the first pathway, prenyltransferase roqD transforms HTD to the intermediate roquefortine D, which is in turn converted to roquefortine C by the cytochrome P450 monooxygenase roqR. In the second pathway, HTD is first converted to the intermediate dehydrohistidyltryptophanyldi-ketopiperazine (DHTD) by roqR which is then prenylated by roqD to form roquefortine C. Roquefortine C can be further transformed to meleagrin via three more reactions including oxydation to glandicolin A by roqM, which is further reduced to glandicoline B by roqO. Finally, glandicoline B is converted to meleagrin by the glandicoline B O-methyltransferase roqN. More studies identified further branching and additional metabolites produced by the roquefortine/meleagrin cluster, including roquefortine F, roquefortine L, roquefortine M, roquefortine N and neoxaline. This is Nonribosomal peptide synthase roqA from Penicillium rubens (strain ATCC 28089 / DSM 1075 / NRRL 1951 / Wisconsin 54-1255) (Penicillium chrysogenum).